Reading from the N-terminus, the 281-residue chain is MEMO1 family protein PAE0818 (281 aa).

This sequence belongs to the MEMO1 family.

In Pyrobaculum aerophilum (strain ATCC 51768 / DSM 7523 / JCM 9630 / CIP 104966 / NBRC 100827 / IM2), this protein is MEMO1 family protein PAE0818.